The chain runs to 492 residues: N-succinylglutamate 5-semialdehyde dehydrogenase (492 aa).

220–225 (GRANTG) is a binding site for NAD(+). Catalysis depends on residues Glu-243 and Cys-277.

It belongs to the aldehyde dehydrogenase family. AstD subfamily.

The catalysed reaction is N-succinyl-L-glutamate 5-semialdehyde + NAD(+) + H2O = N-succinyl-L-glutamate + NADH + 2 H(+). Its pathway is amino-acid degradation; L-arginine degradation via AST pathway; L-glutamate and succinate from L-arginine: step 4/5. Functionally, catalyzes the NAD-dependent reduction of succinylglutamate semialdehyde into succinylglutamate. This Shigella boydii serotype 4 (strain Sb227) protein is N-succinylglutamate 5-semialdehyde dehydrogenase.